Consider the following 243-residue polypeptide: 1-(5-phosphoribosyl)-5-[(5-phosphoribosylamino)methylideneamino] imidazole-4-carboxamide isomerase (243 aa).

The active-site Proton acceptor is Asp-8. Asp-130 (proton donor) is an active-site residue.

It belongs to the HisA/HisF family.

The protein resides in the cytoplasm. The enzyme catalyses 1-(5-phospho-beta-D-ribosyl)-5-[(5-phospho-beta-D-ribosylamino)methylideneamino]imidazole-4-carboxamide = 5-[(5-phospho-1-deoxy-D-ribulos-1-ylimino)methylamino]-1-(5-phospho-beta-D-ribosyl)imidazole-4-carboxamide. The protein operates within amino-acid biosynthesis; L-histidine biosynthesis; L-histidine from 5-phospho-alpha-D-ribose 1-diphosphate: step 4/9. The chain is 1-(5-phosphoribosyl)-5-[(5-phosphoribosylamino)methylideneamino] imidazole-4-carboxamide isomerase from Methylococcus capsulatus (strain ATCC 33009 / NCIMB 11132 / Bath).